The chain runs to 950 residues: A disintegrin and metalloproteinase with thrombospondin motifs 15 (950 aa).

The signal sequence occupies residues 1-18 (MLLLGISILALAWRPAGS). The propeptide occupies 19–212 (SEPEWEVVVP…NRRRSGRAKR (194 aa)). Asn-141 carries N-linked (GlcNAc...) asparagine glycosylation. The disordered stretch occupies residues 144 to 172 (APEAQRHSQGAHLLQRRGAPVGPSGDPTS). The short motif at 172–179 (SRCGVASG) is the Cysteine switch element. Cys-174 contacts Zn(2+). In terms of domain architecture, Peptidase M12B spans 218 to 427 (RYVETLVVAD…GHGDCLLDQP (210 aa)). Cystine bridges form between Cys-293-Cys-345, Cys-322-Cys-327, Cys-339-Cys-422, Cys-377-Cys-406, Cys-448-Cys-470, Cys-459-Cys-480, Cys-465-Cys-499, Cys-493-Cys-504, Cys-528-Cys-565, Cys-532-Cys-570, and Cys-543-Cys-555. Zn(2+) is bound at residue His-361. The active site involves Glu-362. Zn(2+) is bound by residues His-365 and His-371. A Disintegrin domain is found at 428-515 (SKPITLPEDL…ERHNPNKYRV (88 aa)). One can recognise a TSP type-1 1 domain in the interval 516-571 (DGSWAKWEPYGSCSRTCGGGVQLARRQCSNPTPANGGKYCEGVRVKYRSCNLEPCP). Asn-591, Asn-623, and Asn-679 each carry an N-linked (GlcNAc...) asparagine glycan. The spacer stretch occupies residues 701 to 838 (AIPAGASSID…SNQVEQPDNR (138 aa)). The tract at residues 798-822 (FYLPKEPREDKSTRPKDPRGSPVLR) is disordered. The span at 802 to 816 (KEPREDKSTRPKDPR) shows a compositional bias: basic and acidic residues. 2 consecutive TSP type-1 domains span residues 839–895 (PPAR…EPCP) and 896–949 (TWEL…VLRP).

Requires Zn(2+) as cofactor. In terms of processing, the precursor is cleaved by a furin endopeptidase. Glycosylated. Can be O-fucosylated by POFUT2 on a serine or a threonine residue found within the consensus sequence C1-X(2)-(S/T)-C2-G of the TSP type-1 repeat domains where C1 and C2 are the first and second cysteine residue of the repeat, respectively. Fucosylated repeats can then be further glycosylated by the addition of a beta-1,3-glucose residue by the glucosyltransferase, B3GALTL. Fucosylation mediates the efficient secretion of ADAMTS family members. Can be C-glycosylated with one or two mannose molecules on tryptophan residues within the consensus sequence W-X-X-W of the TPRs. Also N-glycosylated. These other glycosylations can also facilitate secretion. As to expression, in the adult colon, highly expressed in the muscularis externa (inner circular smooth muscle and outer longitudinal smooth muscle), muscularis mucosa, submucosal glands, crypt, villi epithelial cells, goblet cells and lamina propria. Expressed at perimuscular and peritendious areas in the developing limbs.

The protein resides in the secreted. The protein localises to the extracellular space. Its subcellular location is the extracellular matrix. It is found in the cell surface. Functionally, metalloprotease which has proteolytic activity against the proteoglycan VCAN, cleaving it at the 'Glu-1401-|-1402-Ala' site. Cleaves VCAN in the pericellular matrix surrounding myoblasts, facilitating myoblast contact and fusion which is required for skeletal muscle development and regeneration. The protein is A disintegrin and metalloproteinase with thrombospondin motifs 15 (Adamts15) of Mus musculus (Mouse).